The chain runs to 142 residues: Large-conductance mechanosensitive channel (142 aa).

3 helical membrane-spanning segments follow: residues 19–39, 41–61, and 78–98; these read VGII…ADLV, PFIA…ALDG, and FAFG…FVVF.

It belongs to the MscL family. Homopentamer.

The protein resides in the cell inner membrane. In terms of biological role, channel that opens in response to stretch forces in the membrane lipid bilayer. May participate in the regulation of osmotic pressure changes within the cell. This is Large-conductance mechanosensitive channel from Roseobacter denitrificans (strain ATCC 33942 / OCh 114) (Erythrobacter sp. (strain OCh 114)).